Here is a 350-residue protein sequence, read N- to C-terminus: 4-hydroxy-2-oxovalerate aldolase 3 (350 aa).

A Pyruvate carboxyltransferase domain is found at Val13–Met265. Residue Arg21–Asp22 coordinates substrate. Mn(2+) is bound at residue Asp22. The active-site Proton acceptor is the His25. Positions 175 and 204 each coordinate substrate. Positions 204 and 206 each coordinate Mn(2+). A substrate-binding site is contributed by Tyr295.

The protein belongs to the 4-hydroxy-2-oxovalerate aldolase family.

The catalysed reaction is (S)-4-hydroxy-2-oxopentanoate = acetaldehyde + pyruvate. In Azotobacter vinelandii (strain DJ / ATCC BAA-1303), this protein is 4-hydroxy-2-oxovalerate aldolase 3 (lapG).